The following is a 1441-amino-acid chain: Cleavage and polyadenylation specificity factor subunit 1 (1441 aa).

Disordered stretches follow at residues 404–435, 545–569, 713–775, and 899–921; these read PASS…GGKT, EEET…DGRR, GGAR…PAPF, and FREK…EGSG. A compositionally biased stretch (basic and acidic residues) spans 410–419; the sequence is EAADKEEPPS. Residues Ser754 and Ser764 each carry the phosphoserine modification. Positions 756-773 are enriched in basic and acidic residues; the sequence is SKEEARRSSQPPADRDPA.

Belongs to the CPSF1 family. In terms of assembly, component of the cleavage and polyadenylation specificity factor (CPSF) complex, composed of CPSF1, CPSF2, CPSF3, CPSF4 and FIP1L1. Found in a complex with CPSF1, FIP1L1 and PAPOLA. Interacts with FIP1L1 and SRRM1. Interacts with TUT1; the interaction is direct and mediates the recruitment of the CPSF complex on the 3'UTR of selected pre-mRNAs. Interacts with TENT2/GLD2.

The protein resides in the nucleus. It is found in the nucleoplasm. Its function is as follows. Component of the cleavage and polyadenylation specificity factor (CPSF) complex that plays a key role in pre-mRNA 3'-end formation, recognizing the AAUAAA signal sequence and interacting with poly(A) polymerase and other factors to bring about cleavage and poly(A) addition. This subunit is involved in the RNA recognition step of the polyadenylation reaction. May play a role in eye morphogenesis and the development of retinal ganglion cell projections to the midbrain. This is Cleavage and polyadenylation specificity factor subunit 1 (Cpsf1) from Mus musculus (Mouse).